We begin with the raw amino-acid sequence, 157 residues long: Phosphopantetheine adenylyltransferase (157 aa).

Ser8 contributes to the substrate binding site. ATP-binding positions include Ser8–Phe9 and His16. Substrate contacts are provided by Lys40, Thr72, and Arg86. ATP is bound by residues Gly87 to Arg89, Glu97, and Tyr122 to Ser128.

Belongs to the bacterial CoaD family. As to quaternary structure, homohexamer. Mg(2+) serves as cofactor.

The protein localises to the cytoplasm. It carries out the reaction (R)-4'-phosphopantetheine + ATP + H(+) = 3'-dephospho-CoA + diphosphate. The protein operates within cofactor biosynthesis; coenzyme A biosynthesis; CoA from (R)-pantothenate: step 4/5. In terms of biological role, reversibly transfers an adenylyl group from ATP to 4'-phosphopantetheine, yielding dephospho-CoA (dPCoA) and pyrophosphate. In Crocosphaera subtropica (strain ATCC 51142 / BH68) (Cyanothece sp. (strain ATCC 51142)), this protein is Phosphopantetheine adenylyltransferase.